Reading from the N-terminus, the 266-residue chain is Na(+)-translocating NADH-quinone reductase subunit C (266 aa).

The chain crosses the membrane as a helical span at residues 16–36 (LLVVVILCLVCSVVVAGAAVG). The residue at position 232 (T232) is an FMN phosphoryl threonine.

The protein belongs to the NqrC family. As to quaternary structure, composed of six subunits; NqrA, NqrB, NqrC, NqrD, NqrE and NqrF. FMN is required as a cofactor.

It localises to the cell inner membrane. The enzyme catalyses a ubiquinone + n Na(+)(in) + NADH + H(+) = a ubiquinol + n Na(+)(out) + NAD(+). NQR complex catalyzes the reduction of ubiquinone-1 to ubiquinol by two successive reactions, coupled with the transport of Na(+) ions from the cytoplasm to the periplasm. NqrA to NqrE are probably involved in the second step, the conversion of ubisemiquinone to ubiquinol. In Yersinia pestis, this protein is Na(+)-translocating NADH-quinone reductase subunit C.